A 418-amino-acid chain; its full sequence is Gamma-glutamyl phosphate reductase (418 aa).

Belongs to the gamma-glutamyl phosphate reductase family.

It is found in the cytoplasm. The enzyme catalyses L-glutamate 5-semialdehyde + phosphate + NADP(+) = L-glutamyl 5-phosphate + NADPH + H(+). The protein operates within amino-acid biosynthesis; L-proline biosynthesis; L-glutamate 5-semialdehyde from L-glutamate: step 2/2. Catalyzes the NADPH-dependent reduction of L-glutamate 5-phosphate into L-glutamate 5-semialdehyde and phosphate. The product spontaneously undergoes cyclization to form 1-pyrroline-5-carboxylate. The sequence is that of Gamma-glutamyl phosphate reductase from Geobacter sp. (strain M21).